We begin with the raw amino-acid sequence, 475 residues long: Aspartyl/glutamyl-tRNA(Asn/Gln) amidotransferase subunit B (475 aa).

This sequence belongs to the GatB/GatE family. GatB subfamily. Heterotrimer of A, B and C subunits.

It carries out the reaction L-glutamyl-tRNA(Gln) + L-glutamine + ATP + H2O = L-glutaminyl-tRNA(Gln) + L-glutamate + ADP + phosphate + H(+). It catalyses the reaction L-aspartyl-tRNA(Asn) + L-glutamine + ATP + H2O = L-asparaginyl-tRNA(Asn) + L-glutamate + ADP + phosphate + 2 H(+). Its function is as follows. Allows the formation of correctly charged Asn-tRNA(Asn) or Gln-tRNA(Gln) through the transamidation of misacylated Asp-tRNA(Asn) or Glu-tRNA(Gln) in organisms which lack either or both of asparaginyl-tRNA or glutaminyl-tRNA synthetases. The reaction takes place in the presence of glutamine and ATP through an activated phospho-Asp-tRNA(Asn) or phospho-Glu-tRNA(Gln). In Bacillus cereus (strain B4264), this protein is Aspartyl/glutamyl-tRNA(Asn/Gln) amidotransferase subunit B.